Here is a 289-residue protein sequence, read N- to C-terminus: Pre-mRNA-splicing factor cwf23 (289 aa).

The J domain maps to 9–74 (DYYELLGINE…QLRKAYDSER (66 aa)). Positions 129 to 148 (ESANLRRQRENRLREEQEQS) are enriched in basic and acidic residues. 2 disordered regions span residues 129–161 (ESAN…SKIS) and 269–289 (KQKH…TMNA).

The protein belongs to the DnaJ family. In terms of assembly, belongs to the 40S cdc5-associated complex (or cwf complex), a spliceosome sub-complex reminiscent of a late-stage spliceosome composed of the U2, U5 and U6 snRNAs and at least brr2, cdc5, cwf2/prp3, cwf3/syf1, cwf4/syf3, cwf5/ecm2, spp42/cwf6, cwf7/spf27, cwf8, cwf9, cwf10, cwf11, cwf12, prp45/cwf13, cwf14, cwf15, cwf16, cwf17, cwf18, cwf19, cwf20, cwf21, cwf22, cwf23, cwf24, cwf25, cwf26, cyp7/cwf27, cwf28, cwf29/ist3, lea1, msl1, prp5/cwf1, prp10, prp12/sap130, prp17, prp22, sap61, sap62, sap114, sap145, slu7, smb1, smd1, smd3, smf1, smg1 and syf2.

The protein resides in the cytoplasm. The protein localises to the nucleus. Its function is as follows. Involved in pre-mRNA splicing. May be involved in endoplasmic reticulum-associated protein degradation (ERAD) and required for growth at low and high temperatures. The sequence is that of Pre-mRNA-splicing factor cwf23 (cwf23) from Schizosaccharomyces pombe (strain 972 / ATCC 24843) (Fission yeast).